A 174-amino-acid polypeptide reads, in one-letter code: Nicotinamide-nucleotide adenylyltransferase (174 aa).

It belongs to the archaeal NMN adenylyltransferase family.

It localises to the cytoplasm. The enzyme catalyses beta-nicotinamide D-ribonucleotide + ATP + H(+) = diphosphate + NAD(+). It participates in cofactor biosynthesis; NAD(+) biosynthesis; NAD(+) from nicotinamide D-ribonucleotide: step 1/1. The chain is Nicotinamide-nucleotide adenylyltransferase from Methanospirillum hungatei JF-1 (strain ATCC 27890 / DSM 864 / NBRC 100397 / JF-1).